A 564-amino-acid chain; its full sequence is Septation ring formation regulator EzrA (564 aa).

At 1–2 (ME) the chain is on the extracellular side. A helical transmembrane segment spans residues 3–21 (FVIGLLALFLILFATGYLF). The Cytoplasmic segment spans residues 22–564 (RKNIYKEIDR…RLEADAKQPE (543 aa)). Coiled coils occupy residues 99–159 (QKSK…AYSH), 243–281 (KGYK…EAAA), and 310–498 (KVPE…VELV).

This sequence belongs to the EzrA family.

The protein resides in the cell membrane. Negative regulator of FtsZ ring formation; modulates the frequency and position of FtsZ ring formation. Inhibits FtsZ ring formation at polar sites. Interacts either with FtsZ or with one of its binding partners to promote depolymerization. This chain is Septation ring formation regulator EzrA, found in Bacillus licheniformis (strain ATCC 14580 / DSM 13 / JCM 2505 / CCUG 7422 / NBRC 12200 / NCIMB 9375 / NCTC 10341 / NRRL NRS-1264 / Gibson 46).